We begin with the raw amino-acid sequence, 238 residues long: Ubiquinone/menaquinone biosynthesis C-methyltransferase UbiE (238 aa).

Residues Thr62 and Asp82 each coordinate S-adenosyl-L-methionine.

The protein belongs to the class I-like SAM-binding methyltransferase superfamily. MenG/UbiE family.

It carries out the reaction a 2-demethylmenaquinol + S-adenosyl-L-methionine = a menaquinol + S-adenosyl-L-homocysteine + H(+). The catalysed reaction is a 2-methoxy-6-(all-trans-polyprenyl)benzene-1,4-diol + S-adenosyl-L-methionine = a 5-methoxy-2-methyl-3-(all-trans-polyprenyl)benzene-1,4-diol + S-adenosyl-L-homocysteine + H(+). It functions in the pathway quinol/quinone metabolism; menaquinone biosynthesis; menaquinol from 1,4-dihydroxy-2-naphthoate: step 2/2. It participates in cofactor biosynthesis; ubiquinone biosynthesis. Its function is as follows. Methyltransferase required for the conversion of demethylmenaquinol (DMKH2) to menaquinol (MKH2) and the conversion of 2-polyprenyl-6-methoxy-1,4-benzoquinol (DDMQH2) to 2-polyprenyl-3-methyl-6-methoxy-1,4-benzoquinol (DMQH2). The protein is Ubiquinone/menaquinone biosynthesis C-methyltransferase UbiE of Wolbachia pipientis wMel.